The sequence spans 964 residues: MVLTNVKQFASEMNLTPERLLEQLRAAGVSKRSPEDSLSAQDKSQLLDYLKRSHGAREDSGITLTRKSTSEVKKADGSTVTVETRKKRVVVRPDDAPRAEAPKPAEPAPAPAAAPAEAKPEPKPEPKVEAKPEPKPEPKPEPKVEAKPEPKPEPKPAAAPAPRTVASILSPEEIAAREAEEKRQAAFRARQEALMREKIEREERRQAAKLAASQPAPEPAPVVEPQREERRDDRRGAPSGDNRGPRGNDNRGPRPAGAGDRGPRPGGDNRGPRPAGAGDRGPRPGGDNRGPRPAGAGDRGPRPAPAAAAPSQPPAPAPGGSRPGKGKKGGERSWDDNKKGGRGLKTKGGDAGNDWKSRGGKGRNKQNNQHAFQAPTEPIVHEVLVPETITVAELAHKMAVKAVEVIKTLMKMGMMVTINQVLDQETALIVVEEMGHIGKAAQADDPEAYLDVTDGETVEVVEQPRSPVVTVMGHVDHGKTSLLDYIRRAKVAAGEAGGITQHIGAYHVETPRGMITFLDTPGHEAFTAMRARGAKATDIVVLVVAADDGVMPQTIEAIHHAKAAKVPMVVAVNKIDKQGANVERIRQELVAHEVVPEDWGGDTQFVEVSAKMGLNIDALLEAILLQAEVLELKAPVDSLAKGIIVEARLDKGRGPVATLLVQSGTLKKGDVVLAGTAFGRVRAMMDENGKAIDSAGPAIPVEILGLSDVPQAGEDAMALADEKKAREIALFRAGKFRDVRLAKQQAAKLENMFAQMAEGEVQTLSIIIKADVQGSYEALAGSLQKLSTEEVRVAILHSGVGGISESDVNLAIASKAIVIGFNTRADAAARKLAENEGVDIRYYNIIYDAVDEVKAALSGMLAPEKKEQILGTVEIRQVITVSKVGNIAGCMVTDGMIKRSASIRLIRNHVVIHTGELESLKRFKDDVKEVKQGYECGLMLKNFNDIQEGDQLEAFEIVEVARSL.

The segment at 26 to 375 (AAGVSKRSPE…QNNQHAFQAP (350 aa)) is disordered. Basic and acidic residues-rich tracts occupy residues 49 to 60 (YLKRSHGAREDS), 91 to 103 (VRPDDAPRAEAPK), 118 to 154 (AKPEPKPEPKVEAKPEPKPEPKPEPKVEAKPEPKPEP), 174 to 206 (IAAREAEEKRQAAFRARQEALMREKIEREERRQ), 225 to 236 (PQREERRDDRRG), 243 to 252 (RGPRGNDNRG), and 328 to 339 (KGGERSWDDNKK). The tr-type G domain occupies 464–633 (PRSPVVTVMG…LLQAEVLELK (170 aa)). The tract at residues 473–480 (GHVDHGKT) is G1. 473-480 (GHVDHGKT) is a binding site for GTP. The interval 498–502 (GITQH) is G2. The segment at 519–522 (DTPG) is G3. Residues 519–523 (DTPGH) and 573–576 (NKID) each bind GTP. Residues 573–576 (NKID) form a G4 region. Positions 609–611 (SAK) are G5.

The protein belongs to the TRAFAC class translation factor GTPase superfamily. Classic translation factor GTPase family. IF-2 subfamily.

It is found in the cytoplasm. Its function is as follows. One of the essential components for the initiation of protein synthesis. Protects formylmethionyl-tRNA from spontaneous hydrolysis and promotes its binding to the 30S ribosomal subunits. Also involved in the hydrolysis of GTP during the formation of the 70S ribosomal complex. This chain is Translation initiation factor IF-2, found in Chromobacterium violaceum (strain ATCC 12472 / DSM 30191 / JCM 1249 / CCUG 213 / NBRC 12614 / NCIMB 9131 / NCTC 9757 / MK).